The sequence spans 831 residues: Isethionate sulfite-lyase (831 aa).

Positions 32 to 701 constitute a PFL domain; it reads PRVFRLLERF…VVSATPNGRT (670 aa). 2-hydroxyethane-1-sulfonate-binding positions include Arg-189, Gln-193, 468–470, and Arg-679; that span reads CTE. The Cysteine radical intermediate role is filled by Cys-468. Glu-470 (proton acceptor) is an active-site residue. In terms of domain architecture, Glycine radical spans 708 to 831; it reads DGSSASHGAD…LIARTEHDVM (124 aa). Glycine radical is present on Gly-806.

This sequence belongs to the glycyl radical enzyme (GRE) family. As to quaternary structure, homodimer. In terms of processing, requires the activating protein IslB to generate the key active site glycyl radical on Gly-806 that is involved in catalysis.

The catalysed reaction is 2-hydroxyethane-1-sulfonate = acetaldehyde + sulfite + H(+). The protein operates within organosulfur degradation; alkanesulfonate degradation. Functionally, involved in an anaerobic respiration pathway that converts the sulfonate isethionate (2-hydroxyethanesulfonate) to ammonia, acetate and sulfide. Catalyzes the radical-mediated C-S bond cleavage of isethionate (2-hydroxyethanesulfonate) to form sulfite and acetaldehyde. The protein is Isethionate sulfite-lyase of Desulfovibrio desulfuricans (strain ATCC 27774 / DSM 6949 / MB).